The chain runs to 1270 residues: Breakpoint cluster region protein (1270 aa).

Position 1 is an N-acetylmethionine (M1). The segment at 1–428 (MVDSVGFAEA…DGDSTFQGEA (428 aa)) is kinase. Positions 28–55 (VGDIEQELERCKASIRRLEQEVNQERFR) form a coiled coil. The interval 67 to 173 (KKSYDRQRWG…GPAQPGSADA (107 aa)) is disordered. The segment covering 121–139 (GSPSKGRSASARRPAAAAS) has biased composition (low complexity). Residues S122 and S139 each carry the phosphoserine modification. Y178 is modified (phosphotyrosine; by HCK). The interval 198-387 (SDRISSLGSQ…QSFDSSSPPT (190 aa)) is binding to ABL SH2-domain. 3 disordered regions span residues 201-249 (ISSL…DYED), 295-396 (KSPL…RHRQ), and 412-481 (TGQI…SGAL). S203, S216, and S237 each carry phosphoserine. The residue at position 247 (Y247) is a Phosphotyrosine; by FES. Low complexity-rich tracts occupy residues 348–358 (SSGQSSRVSPS) and 371–384 (SPSQ…DSSS). Residues S358, S379, and S384 each carry the phosphoserine modification. Phosphothreonine is present on T387. A phosphoserine mark is found at S461 and S465. An Omega-N-methylarginine modification is found at R473. Phosphoserine occurs at positions 475 and 487. Residues 497–690 (MRKWVLSGIL…QNFLSSINEE (194 aa)) form the DH domain. Residue Y553 is modified to Phosphotyrosine. T640 is subject to Phosphothreonine. A Phosphotyrosine modification is found at Y643. Phosphothreonine is present on T692. Residues 707–865 (QLLKDSFMVE…WRESIREQQK (159 aa)) form the PH domain. The C2 domain maps to 892–1019 (HHIPLTINKE…QDRDWQRTVI (128 aa)). The Rho-GAP domain maps to 1053–1247 (VKIAVVTKRE…VMSQVQVLLY (195 aa)). Position 1263 is a phosphoserine (S1263).

In terms of assembly, homotetramer. Interacts with PDZK1. Interacts with HCK, FES/FPS, ABL1, PIK3R1 and GRB2. May interact with CCPG1. Interacts with SH2D5. Interacts with DLG4. Autophosphorylated. Phosphorylated by FES/FPS on tyrosine residues, leading to down-regulation of the BCR kinase activity. Phosphorylation at Tyr-178 by HCK is important for interaction with GRB2. Expressed in brain. In hippocampal subregions, most abundant in the CA1 region and expressed at successively lower levels in the dentate gyrus and the CA3 region.

The protein localises to the postsynaptic density. It localises to the cell projection. Its subcellular location is the dendritic spine. The protein resides in the axon. It is found in the synapse. It catalyses the reaction L-seryl-[protein] + ATP = O-phospho-L-seryl-[protein] + ADP + H(+). It carries out the reaction L-threonyl-[protein] + ATP = O-phospho-L-threonyl-[protein] + ADP + H(+). In terms of biological role, protein with a unique structure having two opposing regulatory activities toward small GTP-binding proteins. The C-terminus is a GTPase-activating protein (GAP) domain which stimulates GTP hydrolysis by RAC1, RAC2 and CDC42. Accelerates the intrinsic rate of GTP hydrolysis of RAC1 or CDC42, leading to down-regulation of the active GTP-bound form. The central Dbl homology (DH) domain functions as guanine nucleotide exchange factor (GEF) that modulates the GTPases CDC42, RHOA and RAC1. Promotes the conversion of CDC42, RHOA and RAC1 from the GDP-bound to the GTP-bound form. The amino terminus contains an intrinsic kinase activity. Functions as an important negative regulator of neuronal RAC1 activity. Regulates macrophage functions such as CSF1-directed motility and phagocytosis through the modulation of RAC1 activity. Plays a major role as a RHOA GEF in keratinocytes being involved in focal adhesion formation and keratinocyte differentiation. This chain is Breakpoint cluster region protein, found in Mus musculus (Mouse).